Here is a 395-residue protein sequence, read N- to C-terminus: Elongation factor Tu (395 aa).

Residues 10–204 (KPHVNIGTIG…IVDEYIPTPE (195 aa)) enclose the tr-type G domain. Residues 19–26 (GHVDHGKT) are G1. 19–26 (GHVDHGKT) serves as a coordination point for GTP. T26 contacts Mg(2+). Positions 60–64 (GITIN) are G2. Residues 81 to 84 (DAPG) form a G3 region. GTP is bound by residues 81-85 (DAPGH) and 136-139 (NKAD). The interval 136 to 139 (NKAD) is G4. The interval 174–176 (SAL) is G5.

This sequence belongs to the TRAFAC class translation factor GTPase superfamily. Classic translation factor GTPase family. EF-Tu/EF-1A subfamily. As to quaternary structure, monomer.

It is found in the cytoplasm. The catalysed reaction is GTP + H2O = GDP + phosphate + H(+). Its function is as follows. GTP hydrolase that promotes the GTP-dependent binding of aminoacyl-tRNA to the A-site of ribosomes during protein biosynthesis. This chain is Elongation factor Tu, found in Lactococcus lactis subsp. lactis (strain IL1403) (Streptococcus lactis).